A 161-amino-acid chain; its full sequence is Ribosome maturation factor RimP (161 aa).

It belongs to the RimP family.

It localises to the cytoplasm. Its function is as follows. Required for maturation of 30S ribosomal subunits. The protein is Ribosome maturation factor RimP of Herminiimonas arsenicoxydans.